A 1684-amino-acid chain; its full sequence is A-kinase anchor protein 12 (1684 aa).

The interval 1–124 is disordered; the sequence is MGAGSSTEQR…DITKDEQEET (124 aa). Residue Gly-2 is the site of N-myristoyl glycine attachment. Phosphoserine is present on residues Ser-11, Ser-18, Ser-22, and Ser-27. The segment covering 30–48 has biased composition (low complexity); it reads GPAAEASGAAGDPADADPA. Residues 75–86 are compositionally biased toward acidic residues; the sequence is ESQDGQEEEVTV. Residues 89–105 show a composition bias toward basic and acidic residues; the sequence is VGQRESEDVKEKDRAKE. Ser-136 carries the post-translational modification Phosphoserine. Disordered regions lie at residues 175–281 and 296–353; these read SDTV…ETTS and KKTS…SADY. The segment covering 212-227 has biased composition (basic and acidic residues); the sequence is ASKESELKQSTEKQEG. Residues 228–247 show a composition bias toward polar residues; that stretch reads TLKQAQSSTEIPLQAESGQG. Residues Ser-234 and Ser-244 each carry the phosphoserine modification. A compositionally biased stretch (basic and acidic residues) spans 251 to 266; sequence EAAKDGEENREKEPTK. The interval 253 to 543 is involved in PKC-binding; that stretch reads AKDGEENREK…QHIQTESPES (291 aa). Residues Ser-270 and Ser-273 each carry the phosphoserine modification. Residues 270 to 281 are compositionally biased toward polar residues; that stretch reads SPTSPVSNETTS. Over residues 302-320 the composition is skewed to basic and acidic residues; that stretch reads KPKEDDLETSEKRKEQEAE. Positions 321–342 are enriched in acidic residues; sequence KVDEEEGEKTEPAPAEEQEPAE. Thr-330 is modified (phosphothreonine). The residue at position 350 (Ser-350) is a Phosphoserine. Tyr-353 bears the Phosphotyrosine mark. Residues Ser-371 and Ser-467 each carry the phosphoserine modification. Residues 421-479 are disordered; that stretch reads GSGESLPPEKLAETQEVPQEAEPVEELMKTKEVCVSGGDHTQLTDLSPEEKMLPKHPEG. Over residues 468–478 the composition is skewed to basic and acidic residues; that stretch reads PEEKMLPKHPE. Phosphoserine is present on residues Ser-489, Ser-505, and Ser-507. The segment at 492 to 825 is disordered; that stretch reads RIKVQGSPLK…INEDDPDVPA (334 aa). Over residues 497 to 511 the composition is skewed to low complexity; that stretch reads GSPLKKLFSSSGLKK. A compositionally biased stretch (basic residues) spans 512–521; the sequence is LSGKKQKGKR. A phosphoserine mark is found at Ser-540, Ser-543, Ser-584, Ser-598, Ser-613, and Ser-615. The AKAP CaM-binding 1 signature appears at 593-613; that stretch reads ITPWASFKKMVTPKKRVRRPS. A compositionally biased stretch (basic and acidic residues) spans 611–625; that stretch reads RPSESDKEEELDKVK. Positions 626-637 are enriched in low complexity; the sequence is SATLSSTESTAS. Thr-628 bears the Phosphothreonine mark. Phosphoserine occurs at positions 630, 631, 634, and 637. Residues 641–660 show a composition bias toward basic and acidic residues; the sequence is DEVRAVGEEQRSEEPKRRVD. Phosphoserine is present on residues Ser-682, Ser-683, and Ser-684. A compositionally biased stretch (basic and acidic residues) spans 696–710; the sequence is DGHRAEEASKDKEAD. Residues 714–723 are compositionally biased toward polar residues; it reads ASTQEQDQAH. A compositionally biased stretch (low complexity) spans 724 to 741; the sequence is GSSSPEPAGSPSEGEGVS. Phosphoserine is present on residues Ser-733, Ser-745, Ser-767, and Ser-786. Residues 740–760 carry the AKAP CaM-binding 2 motif; the sequence is VSTWESFKRLVTPRKKSKSKL. Residues 781–801 carry the AKAP CaM-binding 3 motif; it reads EESWVSIKKFIPGRRKKRADG. Residue Thr-871 is modified to Phosphothreonine. Position 873 is a phosphoserine (Ser-873). Positions 970-1001 are disordered; sequence TEASGAEETTDMVSAVSQLSDSPDTTEEATPV. A compositionally biased stretch (polar residues) spans 980 to 992; sequence DMVSAVSQLSDSP. Residue Lys-1030 forms a Glycyl lysine isopeptide (Lys-Gly) (interchain with G-Cter in SUMO1) linkage. Disordered stretches follow at residues 1055–1106, 1121–1211, 1232–1365, and 1391–1492; these read VEED…VTED, LMEQ…DVLE, EGEA…DKAD, and TVAT…REKI. Ser-1059 carries the post-translational modification Phosphoserine. Polar residues predominate over residues 1130-1176; the sequence is SSETLTDSETNGSTPLADSDTPNGTQQDETVDSQDSNAIAAVKQSQV. Basic and acidic residues-rich tracts occupy residues 1198–1210 and 1239–1254; these read QEEH…RDVL and DGEK…ELEV. Ser-1292 is modified (phosphoserine). Basic and acidic residues predominate over residues 1293–1331; that stretch reads PEKREMGTDVEKEETETKTEQASEEHEQETAAPEHEGTH. Phosphoserine occurs at positions 1351, 1355, and 1357. Positions 1467–1492 are enriched in basic and acidic residues; that stretch reads QRSDEDNKPDAGPDAAGKESAAREKI. Residues 1501-1514 form an RII-binding region; the sequence is ELESKSNKIVQSVI. Residues Ser-1546 and Ser-1645 each carry the phosphoserine modification. A disordered region spans residues 1568-1684; that stretch reads TLSAVAQEGL…QEPKGDLTES (117 aa). Positions 1653–1684 are enriched in basic and acidic residues; it reads LTEEGDALKEEMNKAQTEEDDLQEPKGDLTES.

Binds to dimeric RII-alpha regulatory subunit of PKC. Isoform 1 is predominantly found in the nervous system. Isoform 3 is testis specific.

Its subcellular location is the cytoplasm. The protein localises to the cytoskeleton. The protein resides in the membrane. Functionally, anchoring protein that mediates the subcellular compartmentation of protein kinase A (PKA) and protein kinase C (PKC). The protein is A-kinase anchor protein 12 (Akap12) of Mus musculus (Mouse).